A 451-amino-acid polypeptide reads, in one-letter code: CBL-interacting protein kinase 10 (451 aa).

In terms of domain architecture, Protein kinase spans 13–267 (YEIGKLLGQG…VSEIMEDPWF (255 aa)). ATP is bound by residues 19 to 27 (LGQGSFAKV) and Lys42. Asp135 serves as the catalytic Proton acceptor. The segment at 153–182 (DFGLSALAECKRQDGLLHTTCGTPAYVAPE) is activation loop. Residues 304-336 (INEGKQEAENLTSLNAFDIISLSSGFDLSAMFE) form the NAF domain. The interval 341-370 (KEESKFTSTNTATTITKKLEDVAKNLRLKF) is PPI.

The protein belongs to the protein kinase superfamily. CAMK Ser/Thr protein kinase family. SNF1 subfamily. Mn(2+) serves as cofactor.

The catalysed reaction is L-seryl-[protein] + ATP = O-phospho-L-seryl-[protein] + ADP + H(+). It catalyses the reaction L-threonyl-[protein] + ATP = O-phospho-L-threonyl-[protein] + ADP + H(+). Its function is as follows. CIPK serine-threonine protein kinases interact with CBL proteins. Binding of a CBL protein to the regulatory NAF domain of CIPK protein lead to the activation of the kinase in a calcium-dependent manner. In Oryza sativa subsp. japonica (Rice), this protein is CBL-interacting protein kinase 10 (CIPK10).